Here is a 427-residue protein sequence, read N- to C-terminus: Serine--tRNA ligase (427 aa).

233-235 (TGE) contributes to the L-serine binding site. 264–266 (RSE) is an ATP binding site. Position 287 (glutamate 287) interacts with L-serine. 351–354 (EVSS) provides a ligand contact to ATP. Serine 387 serves as a coordination point for L-serine.

This sequence belongs to the class-II aminoacyl-tRNA synthetase family. Type-1 seryl-tRNA synthetase subfamily. Homodimer. The tRNA molecule binds across the dimer.

The protein localises to the cytoplasm. It carries out the reaction tRNA(Ser) + L-serine + ATP = L-seryl-tRNA(Ser) + AMP + diphosphate + H(+). The catalysed reaction is tRNA(Sec) + L-serine + ATP = L-seryl-tRNA(Sec) + AMP + diphosphate + H(+). It participates in aminoacyl-tRNA biosynthesis; selenocysteinyl-tRNA(Sec) biosynthesis; L-seryl-tRNA(Sec) from L-serine and tRNA(Sec): step 1/1. In terms of biological role, catalyzes the attachment of serine to tRNA(Ser). Is also able to aminoacylate tRNA(Sec) with serine, to form the misacylated tRNA L-seryl-tRNA(Sec), which will be further converted into selenocysteinyl-tRNA(Sec). In Buchnera aphidicola subsp. Acyrthosiphon pisum (strain 5A), this protein is Serine--tRNA ligase.